A 410-amino-acid polypeptide reads, in one-letter code: Aspartic proteinase Asp1 (410 aa).

The first 23 residues, 1–23, serve as a signal peptide directing secretion; that stretch reads MTARLALLASLLLLLQLVPPSSA. A propeptide spans 24–46 (removed in mature form); the sequence is VVLELHGNVYPIGHFFITMNIGD. One can recognise a Peptidase A1 domain in the interval 38–392; sequence FFITMNIGDP…DSERSLLGWV (355 aa). Residues D56 and D257 contribute to the active site.

This sequence belongs to the peptidase A1 family.

The polypeptide is Aspartic proteinase Asp1 (ASP1) (Oryza sativa subsp. japonica (Rice)).